The following is a 296-amino-acid chain: ATP phosphoribosyltransferase (296 aa).

The protein belongs to the ATP phosphoribosyltransferase family. Long subfamily. Mg(2+) serves as cofactor.

The protein resides in the cytoplasm. The catalysed reaction is 1-(5-phospho-beta-D-ribosyl)-ATP + diphosphate = 5-phospho-alpha-D-ribose 1-diphosphate + ATP. The protein operates within amino-acid biosynthesis; L-histidine biosynthesis; L-histidine from 5-phospho-alpha-D-ribose 1-diphosphate: step 1/9. Its activity is regulated as follows. Feedback inhibited by histidine. In terms of biological role, catalyzes the condensation of ATP and 5-phosphoribose 1-diphosphate to form N'-(5'-phosphoribosyl)-ATP (PR-ATP). Has a crucial role in the pathway because the rate of histidine biosynthesis seems to be controlled primarily by regulation of HisG enzymatic activity. In Halorubrum lacusprofundi (strain ATCC 49239 / DSM 5036 / JCM 8891 / ACAM 34), this protein is ATP phosphoribosyltransferase.